A 387-amino-acid chain; its full sequence is UDP-N-acetylglucosamine--N-acetylmuramyl-(pentapeptide) pyrophosphoryl-undecaprenol N-acetylglucosamine transferase (387 aa).

UDP-N-acetyl-alpha-D-glucosamine contacts are provided by residues 23–25, N135, R174, S203, I261, 280–285, and Q306; these read TGG and ALTVSE.

Belongs to the glycosyltransferase 28 family. MurG subfamily.

It localises to the cell inner membrane. It catalyses the reaction di-trans,octa-cis-undecaprenyl diphospho-N-acetyl-alpha-D-muramoyl-L-alanyl-D-glutamyl-meso-2,6-diaminopimeloyl-D-alanyl-D-alanine + UDP-N-acetyl-alpha-D-glucosamine = di-trans,octa-cis-undecaprenyl diphospho-[N-acetyl-alpha-D-glucosaminyl-(1-&gt;4)]-N-acetyl-alpha-D-muramoyl-L-alanyl-D-glutamyl-meso-2,6-diaminopimeloyl-D-alanyl-D-alanine + UDP + H(+). It participates in cell wall biogenesis; peptidoglycan biosynthesis. In terms of biological role, cell wall formation. Catalyzes the transfer of a GlcNAc subunit on undecaprenyl-pyrophosphoryl-MurNAc-pentapeptide (lipid intermediate I) to form undecaprenyl-pyrophosphoryl-MurNAc-(pentapeptide)GlcNAc (lipid intermediate II). The chain is UDP-N-acetylglucosamine--N-acetylmuramyl-(pentapeptide) pyrophosphoryl-undecaprenol N-acetylglucosamine transferase from Colwellia psychrerythraea (strain 34H / ATCC BAA-681) (Vibrio psychroerythus).